Reading from the N-terminus, the 317-residue chain is Trem-like transcript 1 protein (317 aa).

Positions 1-20 are cleaved as a signal peptide; that stretch reads MDCYLLLLLLLLGLAGQGSA. Positions 21-122 constitute an Ig-like V-type domain; the sequence is DSHPEVLQAP…PQTLHRVSLL (102 aa). At 21–175 the chain is on the extracellular side; it reads DSHPEVLQAP…EFRRRENSIP (155 aa). Intrachain disulfides connect C39–C105 and C53–C60. The disordered stretch occupies residues 147 to 166; it reads TGSLLEDPSLDPSASAGPHE. The chain crosses the membrane as a helical span at residues 176-196; that stretch reads LIWGAVLLLALVVVAVVIFAV. Over 197–317 the chain is Cytoplasmic; sequence MARKKGNRLV…PPNSQTPPSK (121 aa). A lipid anchor (S-palmitoyl cysteine) is attached at C208. The interval 212 to 278 is disordered; that stretch reads QSTGVPGMDP…SQPPLPPKVL (67 aa). Positions 261-275 are enriched in pro residues; that stretch reads SSEPPAPPSQPPLPP. Phosphoserine is present on S283. Residues 284-289 carry the ITIM motif; that stretch reads VTYATV. The disordered stretch occupies residues 295-317; it reads DKGKIASCEPVQDPPNSQTPPSK. A compositionally biased stretch (polar residues) spans 308–317; the sequence is PPNSQTPPSK.

As to quaternary structure, when phosphorylated, interacts with PTPN11. When phosphorylated, interacts with PTPN6. In terms of processing, phosphorylated on tyrosine residues. Highly expressed in bone marrow leukocytes, splenic megakaryocytes and platelets. Detected in brain, liver and in peritoneal monocytes.

It is found in the cell membrane. Its subcellular location is the cytoplasm. In terms of biological role, cell surface receptor that may play a role in the innate and adaptive immune response. The protein is Trem-like transcript 1 protein (Treml1) of Mus musculus (Mouse).